The sequence spans 79 residues: Small ribosomal subunit protein uS17 (79 aa).

The protein belongs to the universal ribosomal protein uS17 family. Part of the 30S ribosomal subunit.

Functionally, one of the primary rRNA binding proteins, it binds specifically to the 5'-end of 16S ribosomal RNA. This is Small ribosomal subunit protein uS17 from Bartonella quintana (strain Toulouse) (Rochalimaea quintana).